Here is a 143-residue protein sequence, read N- to C-terminus: Nucleoside diphosphate kinase (143 aa).

Residues lysine 11, phenylalanine 59, arginine 87, threonine 93, arginine 104, and asparagine 114 each contribute to the ATP site. Catalysis depends on histidine 117, which acts as the Pros-phosphohistidine intermediate.

This sequence belongs to the NDK family. As to quaternary structure, homotetramer. The cofactor is Mg(2+).

Its subcellular location is the cytoplasm. It carries out the reaction a 2'-deoxyribonucleoside 5'-diphosphate + ATP = a 2'-deoxyribonucleoside 5'-triphosphate + ADP. The catalysed reaction is a ribonucleoside 5'-diphosphate + ATP = a ribonucleoside 5'-triphosphate + ADP. Major role in the synthesis of nucleoside triphosphates other than ATP. The ATP gamma phosphate is transferred to the NDP beta phosphate via a ping-pong mechanism, using a phosphorylated active-site intermediate. This is Nucleoside diphosphate kinase from Shewanella halifaxensis (strain HAW-EB4).